The following is a 785-amino-acid chain: Arrestin domain-containing protein D (785 aa).

5 disordered regions span residues 29 to 69 (QNES…SKYP), 172 to 205 (ILLP…TTTT), 326 to 367 (SNNS…ITNN), 435 to 486 (SNSN…SDHN), and 608 to 642 (YSSS…LDEQ). Low complexity predominate over residues 173 to 205 (LLPTTTSTQNSTLSPTLLSSNLNSKSSTTTTTT). The span at 435–450 (SNSNSSSSGGSSNKNN) shows a compositional bias: low complexity. Residues 466–478 (SNKKSSGSHRYHY) are compositionally biased toward basic residues. Positions 608–633 (YSSSGSGSGSGSSNSNSNHSSSNYLN) are enriched in low complexity. An FYVE-type zinc finger spans residues 682–742 (ESSITNCNLC…ICLMCFDAVK (61 aa)). Positions 688, 691, 704, 707, 712, 715, 734, and 737 each coordinate Zn(2+). An RING-type; degenerate zinc finger spans residues 688-738 (CNLCDNTFTIIRRTHHCRACGGVFCEACSNQKVCLYGFGVNNKVRICLMCF).

It belongs to the arrestin family.

In Dictyostelium discoideum (Social amoeba), this protein is Arrestin domain-containing protein D (adcD).